The following is a 331-amino-acid chain: 6-phosphogluconolactonase (331 aa).

An N6-acetyllysine modification is found at Lys-287.

This sequence belongs to the cycloisomerase 2 family.

The enzyme catalyses 6-phospho-D-glucono-1,5-lactone + H2O = 6-phospho-D-gluconate + H(+). Its pathway is carbohydrate degradation; pentose phosphate pathway; D-ribulose 5-phosphate from D-glucose 6-phosphate (oxidative stage): step 2/3. Its function is as follows. Catalyzes the hydrolysis of 6-phosphogluconolactone to 6-phosphogluconate. The chain is 6-phosphogluconolactonase from Escherichia coli O157:H7.